Consider the following 822-residue polypeptide: Coiled-coil domain-containing protein 175 (822 aa).

Coiled-coil stretches lie at residues 129-164, 223-397, and 510-537; these read IIEI…EVLG, IEKQ…KQMM, and HLIE…IEEL.

This is Coiled-coil domain-containing protein 175 (Ccdc175) from Mus musculus (Mouse).